A 132-amino-acid chain; its full sequence is Two-component response regulator ORR42 (132 aa).

The 115-residue stretch at 11–125 (RALLVEDIKV…LEHILQETRS (115 aa)) folds into the Response regulatory domain. Asp61 carries the 4-aspartylphosphate modification.

It belongs to the ARR family. Type-C subfamily. Post-translationally, two-component system major event consists of a His-to-Asp phosphorelay between a sensor histidine kinase (HK) and a response regulator (RR). In plants, the His-to-Asp phosphorelay involves an additional intermediate named Histidine-containing phosphotransfer protein (HPt). This multistep phosphorelay consists of a His-Asp-His-Asp sequential transfer of a phosphate group between first a His and an Asp of the HK protein, followed by the transfer to a conserved His of the HPt protein and finally the transfer to an Asp in the receiver domain of the RR protein.

Its function is as follows. Functions as a response regulator involved in His-to-Asp phosphorelay signal transduction system. Phosphorylation of the Asp residue in the receiver domain activates the ability of the protein to promote the transcription of target genes. May directly activate some type-A response regulators in response to cytokinins. This Oryza sativa subsp. japonica (Rice) protein is Two-component response regulator ORR42.